The chain runs to 386 residues: Protein U3 (386 aa).

The protein is Protein U3 (U3) of Human herpesvirus 6B (strain Z29) (HHV-6 variant B).